Reading from the N-terminus, the 414-residue chain is Mini-circle putative transposase for IS117 (414 aa).

The chain is Mini-circle putative transposase for IS117 from Streptomyces coelicolor (strain ATCC BAA-471 / A3(2) / M145).